Here is a 261-residue protein sequence, read N- to C-terminus: 3-deoxy-manno-octulosonate cytidylyltransferase (261 aa).

Belongs to the KdsB family.

The protein localises to the cytoplasm. It catalyses the reaction 3-deoxy-alpha-D-manno-oct-2-ulosonate + CTP = CMP-3-deoxy-beta-D-manno-octulosonate + diphosphate. It functions in the pathway nucleotide-sugar biosynthesis; CMP-3-deoxy-D-manno-octulosonate biosynthesis; CMP-3-deoxy-D-manno-octulosonate from 3-deoxy-D-manno-octulosonate and CTP: step 1/1. It participates in bacterial outer membrane biogenesis; lipopolysaccharide biosynthesis. Its function is as follows. Activates KDO (a required 8-carbon sugar) for incorporation into bacterial lipopolysaccharide in Gram-negative bacteria. This Dechloromonas aromatica (strain RCB) protein is 3-deoxy-manno-octulosonate cytidylyltransferase.